We begin with the raw amino-acid sequence, 129 residues long: MKKVYATGRRKASIAKVWLTPGAGTMTINGLSLDAWLGGLEAKKLRVKQPLALTKQDTSVNIVATVLGGGFGGQADALRHGISRALVRFNPELKAILKPEGMMTRDSRVVERKKPGKRKARRSRQFSKR.

Positions 104–113 (TRDSRVVERK) are enriched in basic and acidic residues. A disordered region spans residues 104–129 (TRDSRVVERKKPGKRKARRSRQFSKR). Residues 114 to 129 (KPGKRKARRSRQFSKR) are compositionally biased toward basic residues.

It belongs to the universal ribosomal protein uS9 family.

The sequence is that of Small ribosomal subunit protein uS9 from Sulfurimonas denitrificans (strain ATCC 33889 / DSM 1251) (Thiomicrospira denitrificans (strain ATCC 33889 / DSM 1251)).